Reading from the N-terminus, the 324-residue chain is Putative GTPase PYRAB02490 (324 aa).

GTP contacts are provided by residues 52–60, aspartate 194, and 229–231; these read GPPGAGKST and VAT.

The protein belongs to the SIMIBI class G3E GTPase family. ArgK/MeaB subfamily.

In terms of biological role, may have GTPase activity. May also bind and hydrolyze ATP. May function as chaperone. The protein is Putative GTPase PYRAB02490 of Pyrococcus abyssi (strain GE5 / Orsay).